We begin with the raw amino-acid sequence, 353 residues long: Probable dual-specificity RNA methyltransferase RlmN (353 aa).

Glu95 acts as the Proton acceptor in catalysis. Residues 103-333 form the Radical SAM core domain; the sequence is DGGRKTICIS…PILNRRSPGR (231 aa). A disulfide bond links Cys110 and Cys339. [4Fe-4S] cluster is bound by residues Cys117, Cys121, and Cys124. S-adenosyl-L-methionine-binding positions include 164-165, Ser196, 219-221, and Asn296; these read GE and SLN. Cys339 serves as the catalytic S-methylcysteine intermediate.

This sequence belongs to the radical SAM superfamily. RlmN family. [4Fe-4S] cluster is required as a cofactor.

It is found in the cytoplasm. It catalyses the reaction adenosine(2503) in 23S rRNA + 2 reduced [2Fe-2S]-[ferredoxin] + 2 S-adenosyl-L-methionine = 2-methyladenosine(2503) in 23S rRNA + 5'-deoxyadenosine + L-methionine + 2 oxidized [2Fe-2S]-[ferredoxin] + S-adenosyl-L-homocysteine. The enzyme catalyses adenosine(37) in tRNA + 2 reduced [2Fe-2S]-[ferredoxin] + 2 S-adenosyl-L-methionine = 2-methyladenosine(37) in tRNA + 5'-deoxyadenosine + L-methionine + 2 oxidized [2Fe-2S]-[ferredoxin] + S-adenosyl-L-homocysteine. Its function is as follows. Specifically methylates position 2 of adenine 2503 in 23S rRNA and position 2 of adenine 37 in tRNAs. The protein is Probable dual-specificity RNA methyltransferase RlmN of Leptospira biflexa serovar Patoc (strain Patoc 1 / Ames).